The chain runs to 440 residues: Protein disulfide-isomerase A6 (440 aa).

Positions 1 to 19 (MALLVLGLVSCTFFLAVNG) are cleaved as a signal peptide. 2 consecutive Thioredoxin domains span residues 20-133 (LYSS…ALRQ) and 154-287 (SDSS…EDIA). Residues C55 and C58 each act as nucleophile in the active site. C55 and C58 are oxidised to a cystine. A Phosphoserine modification is found at S129. Residues 141–161 (GRSGGYSSGKQGRSDSSSKKD) form a disordered region. The segment covering 152 to 161 (GRSDSSSKKD) has biased composition (basic and acidic residues). The residue at position 156 (S156) is a Phosphoserine; by FAM20C. S158 bears the Phosphoserine mark. Residues C190 and C193 each act as nucleophile in the active site. The cysteines at positions 190 and 193 are disulfide-linked. S428 is modified (phosphoserine). The Prevents secretion from ER signature appears at 437 to 440 (KDEL).

This sequence belongs to the protein disulfide isomerase family. As to quaternary structure, part of a large chaperone multiprotein complex comprising DNAJB11, HSP90B1, HSPA5, HYOU, PDIA2, PDIA4, PDIA6, PPIB, SDF2L1, UGGT1 and very small amounts of ERP29, but not, or at very low levels, CALR nor CANX. Interacts with MICA on the surface of tumor cells, leading to MICA disulfide bond reduction which is required for its release from tumor cells. Interacts with ITGB3 following platelet stimulation. Interacts with ERN1; the interaction is direct. Interacts with EIF2AK3. As to expression, expressed in platelets (at protein level).

The protein localises to the endoplasmic reticulum lumen. It localises to the cell membrane. Its subcellular location is the melanosome. It catalyses the reaction Catalyzes the rearrangement of -S-S- bonds in proteins.. In terms of biological role, may function as a chaperone that inhibits aggregation of misfolded proteins. Negatively regulates the unfolded protein response (UPR) through binding to UPR sensors such as ERN1, which in turn inactivates ERN1 signaling. May also regulate the UPR via the EIF2AK3 UPR sensor. Plays a role in platelet aggregation and activation by agonists such as convulxin, collagen and thrombin. This Homo sapiens (Human) protein is Protein disulfide-isomerase A6 (PDIA6).